The sequence spans 630 residues: 1-deoxy-D-xylulose-5-phosphate synthase (630 aa).

Thiamine diphosphate-binding positions include His72 and 113–115 (GHS). Residue Asp144 participates in Mg(2+) binding. Thiamine diphosphate contacts are provided by residues 145-146 (GA), Asn173, Tyr284, and Glu367. Position 173 (Asn173) interacts with Mg(2+).

This sequence belongs to the transketolase family. DXPS subfamily. Homodimer. Requires Mg(2+) as cofactor. It depends on thiamine diphosphate as a cofactor.

It catalyses the reaction D-glyceraldehyde 3-phosphate + pyruvate + H(+) = 1-deoxy-D-xylulose 5-phosphate + CO2. The protein operates within metabolic intermediate biosynthesis; 1-deoxy-D-xylulose 5-phosphate biosynthesis; 1-deoxy-D-xylulose 5-phosphate from D-glyceraldehyde 3-phosphate and pyruvate: step 1/1. Functionally, catalyzes the acyloin condensation reaction between C atoms 2 and 3 of pyruvate and glyceraldehyde 3-phosphate to yield 1-deoxy-D-xylulose-5-phosphate (DXP). This Geobacillus sp. (strain WCH70) protein is 1-deoxy-D-xylulose-5-phosphate synthase.